A 424-amino-acid polypeptide reads, in one-letter code: Enolase (424 aa).

(2R)-2-phosphoglycerate is bound at residue Gln162. The active-site Proton donor is Glu204. 3 residues coordinate Mg(2+): Asp241, Glu284, and Asp311. 4 residues coordinate (2R)-2-phosphoglycerate: Lys336, Arg365, Ser366, and Lys387. Lys336 acts as the Proton acceptor in catalysis.

Belongs to the enolase family. Mg(2+) is required as a cofactor.

It is found in the cytoplasm. Its subcellular location is the secreted. It localises to the cell surface. The enzyme catalyses (2R)-2-phosphoglycerate = phosphoenolpyruvate + H2O. Its pathway is carbohydrate degradation; glycolysis; pyruvate from D-glyceraldehyde 3-phosphate: step 4/5. Its function is as follows. Catalyzes the reversible conversion of 2-phosphoglycerate (2-PG) into phosphoenolpyruvate (PEP). It is essential for the degradation of carbohydrates via glycolysis. This chain is Enolase, found in Mesorhizobium japonicum (strain LMG 29417 / CECT 9101 / MAFF 303099) (Mesorhizobium loti (strain MAFF 303099)).